The chain runs to 133 residues: Phosphoribosyl-AMP cyclohydrolase (133 aa).

Aspartate 77 is a binding site for Mg(2+). Cysteine 78 provides a ligand contact to Zn(2+). Residues aspartate 79 and aspartate 81 each contribute to the Mg(2+) site. Zn(2+) is bound by residues cysteine 95 and cysteine 102.

Belongs to the PRA-CH family. As to quaternary structure, homodimer. Requires Mg(2+) as cofactor. It depends on Zn(2+) as a cofactor.

It localises to the cytoplasm. The enzyme catalyses 1-(5-phospho-beta-D-ribosyl)-5'-AMP + H2O = 1-(5-phospho-beta-D-ribosyl)-5-[(5-phospho-beta-D-ribosylamino)methylideneamino]imidazole-4-carboxamide. It participates in amino-acid biosynthesis; L-histidine biosynthesis; L-histidine from 5-phospho-alpha-D-ribose 1-diphosphate: step 3/9. Its function is as follows. Catalyzes the hydrolysis of the adenine ring of phosphoribosyl-AMP. In Azotobacter chroococcum mcd 1, this protein is Phosphoribosyl-AMP cyclohydrolase.